Consider the following 365-residue polypeptide: 2-aminoethylphosphonate--pyruvate transaminase (365 aa).

The residue at position 194 (lysine 194) is an N6-(pyridoxal phosphate)lysine.

It belongs to the class-V pyridoxal-phosphate-dependent aminotransferase family. PhnW subfamily. As to quaternary structure, homodimer. The cofactor is pyridoxal 5'-phosphate.

The enzyme catalyses (2-aminoethyl)phosphonate + pyruvate = phosphonoacetaldehyde + L-alanine. Involved in phosphonate degradation. In Bacillus cereus (strain AH187), this protein is 2-aminoethylphosphonate--pyruvate transaminase.